A 277-amino-acid chain; its full sequence is Phosphate import ATP-binding protein PstB 1 (277 aa).

Positions 27–272 (LRVRDLAVSY…PSHELTAAYI (246 aa)) constitute an ABC transporter domain. 59–66 (GPSGCGKT) lines the ATP pocket.

Belongs to the ABC transporter superfamily. Phosphate importer (TC 3.A.1.7) family. As to quaternary structure, the complex is composed of two ATP-binding proteins (PstB), two transmembrane proteins (PstC and PstA) and a solute-binding protein (PstS).

It localises to the cell inner membrane. It catalyses the reaction phosphate(out) + ATP + H2O = ADP + 2 phosphate(in) + H(+). Functionally, part of the ABC transporter complex PstSACB involved in phosphate import. Responsible for energy coupling to the transport system. In Nitrosococcus oceani (strain ATCC 19707 / BCRC 17464 / JCM 30415 / NCIMB 11848 / C-107), this protein is Phosphate import ATP-binding protein PstB 1.